The chain runs to 389 residues: 26S proteasome non-ATPase regulatory subunit 6 (389 aa).

Residues 193–361 (DFKQAAELFL…EVVETNRPDS (169 aa)) enclose the PCI domain.

Belongs to the proteasome subunit S10 family. As to quaternary structure, component of the 19S proteasome regulatory particle complex. The 26S proteasome consists of a 20S core particle (CP) and two 19S regulatory subunits (RP). The regulatory particle is made of a lid composed of 9 subunits including PSMD6, a base containing 6 ATPases and few additional components.

In terms of biological role, component of the 26S proteasome, a multiprotein complex involved in the ATP-dependent degradation of ubiquitinated proteins. This complex plays a key role in the maintenance of protein homeostasis by removing misfolded or damaged proteins, which could impair cellular functions, and by removing proteins whose functions are no longer required. Therefore, the proteasome participates in numerous cellular processes, including cell cycle progression, apoptosis, or DNA damage repair. The sequence is that of 26S proteasome non-ATPase regulatory subunit 6 (PSMD6) from Bos taurus (Bovine).